The following is a 708-amino-acid chain: Polyribonucleotide nucleotidyltransferase (708 aa).

Positions 487 and 493 each coordinate Mg(2+). A KH domain is found at 554–613 (PRIHTMKISADKIKDVIGKGGAVIRALTEETGTTIEIEDDGTIKIAATEGAAAKEAIRRI). One can recognise an S1 motif domain in the interval 623–691 (GVIYTGKVAR…RQGRVRLSMK (69 aa)).

Belongs to the polyribonucleotide nucleotidyltransferase family. In terms of assembly, component of the RNA degradosome, which is a multiprotein complex involved in RNA processing and mRNA degradation. Mg(2+) serves as cofactor.

Its subcellular location is the cytoplasm. The enzyme catalyses RNA(n+1) + phosphate = RNA(n) + a ribonucleoside 5'-diphosphate. In terms of biological role, involved in mRNA degradation. Catalyzes the phosphorolysis of single-stranded polyribonucleotides processively in the 3'- to 5'-direction. In Vibrio vulnificus (strain CMCP6), this protein is Polyribonucleotide nucleotidyltransferase.